Here is a 72-residue protein sequence, read N- to C-terminus: uncharacterized protein (72 aa).

Residues 1-53 (MTNEPSTSTPTSTSTSTSTSTSTSTTTLTSTSSTPTSTSTSTSTSTSTSTSTS) are disordered.

This is an uncharacterized protein from Dictyostelium discoideum (Social amoeba).